Consider the following 1293-residue polypeptide: DNA repair protein complementing XP-C cells homolog (1293 aa).

Disordered stretches follow at residues 1–199 (MSDE…FEDK), 217–239 (ERTRDALSKRNVTATPPRSQAAT), 255–341 (QSVE…NISG), 514–640 (DLIP…SKCL), and 658–919 (LSSK…EPAK). Residues 18–30 (DEWKPSKDVKGGE) are compositionally biased toward basic and acidic residues. Phosphoserine occurs at positions 31, 32, and 37. Acidic residues predominate over residues 31 to 43 (SSDDDDSDFDELQ). Over residues 51 to 60 (SSGRSSAVAG) the composition is skewed to low complexity. 2 stretches are compositionally biased toward polar residues: residues 101–130 (FPTSPSQQKENTPRASGSKNAKTPNESGAR) and 226–238 (RNVTATPPRSQAA). The segment covering 288-301 (SKTKSTRIKRHTKT) has biased composition (basic residues). The span at 313–335 (DTDDSDFEEVADADLSSDQDDGE) shows a compositional bias: acidic residues. A compositionally biased stretch (basic and acidic residues) spans 520–578 (LRPDDKNKSQTVESERESEDEKPKKDKKAGKPAEKESSKSTISKEAEKKNNAKKAEAKP). Phosphoserine is present on residues Ser-533 and Ser-537. A compositionally biased stretch (low complexity) spans 580–594 (SKSTTKGSETTKSGT). Positions 598-612 (VKKELSLSSKLVEKS) are enriched in basic and acidic residues. Residues 658–692 (LSSKLVLKSKNQSSFSSNKSDTSFEENPSTSSSSK) are compositionally biased toward low complexity. A compositionally biased stretch (basic and acidic residues) spans 693–711 (SLKEETAKLSSSKLEDKKV). Polar residues predominate over residues 720-737 (KVQSSLLKRVTTQNISES). The segment covering 806–818 (HLQEQRNTRETRS) has biased composition (basic and acidic residues). Phosphoserine is present on residues Ser-908 and Ser-911. 3 consecutive short sequence motifs (nuclear localization signal) follow at residues 922 to 938 (KKAPVLPKSVQNLRKDR), 1195 to 1211 (KKTVHLRLPGLMRICKK), and 1275 to 1291 (KKLIKGLLIRERLKKKY).

It belongs to the XPC family. In terms of assembly, heterodimer.

The protein localises to the nucleus. Involved in DNA excision repair. May play a part in DNA damage recognition and/or in altering chromatin structure to allow access by damage-processing enzymes. In terms of biological role, involved in nucleotide excision repair of DNA damaged with UV light, bulky adducts, or cross-linking agents. This Drosophila melanogaster (Fruit fly) protein is DNA repair protein complementing XP-C cells homolog.